Here is a 355-residue protein sequence, read N- to C-terminus: MTQNYRITLLSGDGIGPEIMAVAVDVLKAVGKQLDLNFEFKEALMGGVAIDATGEPLPEESLQACRDSDAVLLAAIGGYKWDNLPRPERPETGLLALRAGLGLFANRARLLFCPHVLDASSLKREVVEGVDIMVVRELTGGIYFGQPKGIFETETGKNEGSNTMAYGESEIDRIGRVGFETAKKRQGRLCSVDKANVLDVSQLWRDRIMALAADYPEVELSHLYVDNAAMQLVRWPKQFDTIVTGNLFGDILSDAAAMLTGSIGMLPSASLGASGPGVFEPVHGSAPDIAGQDKANPLAQVLSAAMMLRYGLDEPAASDPVEKAVLKVLDWGYPTGDIMSEGMKAVGCRKWGICY.

78 to 91 lines the NAD(+) pocket; the sequence is GYKWDNLPRPERPE. Substrate-binding residues include Arg-98, Arg-136, and Asp-226. Residues Asp-226, Asp-250, and Asp-254 each contribute to the Mg(2+) site. 284–296 serves as a coordination point for NAD(+); the sequence is GSAPDIAGQDKAN.

It belongs to the isocitrate and isopropylmalate dehydrogenases family. LeuB type 1 subfamily. Homodimer. The cofactor is Mg(2+). Mn(2+) serves as cofactor.

The protein resides in the cytoplasm. The enzyme catalyses (2R,3S)-3-isopropylmalate + NAD(+) = 4-methyl-2-oxopentanoate + CO2 + NADH. It functions in the pathway amino-acid biosynthesis; L-leucine biosynthesis; L-leucine from 3-methyl-2-oxobutanoate: step 3/4. In terms of biological role, catalyzes the oxidation of 3-carboxy-2-hydroxy-4-methylpentanoate (3-isopropylmalate) to 3-carboxy-4-methyl-2-oxopentanoate. The product decarboxylates to 4-methyl-2 oxopentanoate. The sequence is that of 3-isopropylmalate dehydrogenase (leuB) from Arthrospira platensis (Spirulina platensis).